The chain runs to 308 residues: Mycothiol acetyltransferase (308 aa).

N-acetyltransferase domains lie at 12-149 (DVLD…RPLG) and 165-308 (VTVR…RTET). 1D-myo-inositol 2-(L-cysteinylamino)-2-deoxy-alpha-D-glucopyranoside is bound at residue Glu43. 88 to 90 (LVV) is an acetyl-CoA binding site. 1D-myo-inositol 2-(L-cysteinylamino)-2-deoxy-alpha-D-glucopyranoside is bound by residues Glu192, Lys231, and Glu240. Residues 244–246 (VGV) and 251–257 (QGGGLGR) contribute to the acetyl-CoA site. Residue Tyr278 participates in 1D-myo-inositol 2-(L-cysteinylamino)-2-deoxy-alpha-D-glucopyranoside binding.

This sequence belongs to the acetyltransferase family. MshD subfamily. Monomer.

It carries out the reaction 1D-myo-inositol 2-(L-cysteinylamino)-2-deoxy-alpha-D-glucopyranoside + acetyl-CoA = mycothiol + CoA + H(+). Functionally, catalyzes the transfer of acetyl from acetyl-CoA to desacetylmycothiol (Cys-GlcN-Ins) to form mycothiol. This chain is Mycothiol acetyltransferase, found in Streptomyces bingchenggensis (strain BCW-1).